The chain runs to 875 residues: Probable serine/threonine-protein kinase samkC (875 aa).

Residues 1 to 12 (METTTITSILDD) are compositionally biased toward polar residues. A disordered region spans residues 1-47 (METTTITSILDDNNNNNNNNNNNNNNNNNNNNNNNNNNNNNNNNNYN). Residues 13-45 (NNNNNNNNNNNNNNNNNNNNNNNNNNNNNNNNN) are compositionally biased toward low complexity. The 66-residue stretch at 51-116 (WDNEMVCKWL…SEFDDLKNIF (66 aa)) folds into the SAM domain. A coiled-coil region spans residues 135-162 (DNNNLNNLNNNNNNNNNNNNNNNNNNNN). Positions 136 to 168 (NNNLNNLNNNNNNNNNNNNNNNNNNNNNNNNNN) are enriched in low complexity. Residues 136 to 170 (NNNLNNLNNNNNNNNNNNNNNNNNNNNNNNNNNKT) form a disordered region. Residues 181–452 (YVFIKQMKGS…SKQLLNFSWF (272 aa)) form the Protein kinase domain. Residues 187 to 195 (MKGSVNCSL) and lysine 210 contribute to the ATP site. Aspartate 301 (proton acceptor) is an active-site residue. Disordered stretches follow at residues 331-362 (NNND…NDTN) and 461-718 (SEPQ…NNNN). Residues 474-554 (PQTSQSKPKP…KPKPSSSLSS (81 aa)) are compositionally biased toward low complexity. Over residues 555-564 (EPPPLEPQPK) the composition is skewed to pro residues. Low complexity-rich tracts occupy residues 565–581 (PQTS…LSSS), 589–611 (QPTQ…SQPT), and 617–653 (QPKS…QQQK). The stretch at 626-655 (QSKQQQQQQQQQQQQQQQQQQQQQQQQKSK) forms a coiled coil. The span at 654–663 (SKPEQSKSKP) shows a compositional bias: basic and acidic residues. The segment covering 664–718 (EQSQSKPQPGQPLQSPSKPQPIPSTTKTTTTTTTTTTPNNNNNNNNNNNNNNNNN) has biased composition (low complexity). The helical transmembrane segment at 842–862 (TLILYTFYYFLSNTLIYQIIL) threads the bilayer.

The protein belongs to the protein kinase superfamily. Ser/Thr protein kinase family.

The protein resides in the membrane. The enzyme catalyses L-seryl-[protein] + ATP = O-phospho-L-seryl-[protein] + ADP + H(+). It carries out the reaction L-threonyl-[protein] + ATP = O-phospho-L-threonyl-[protein] + ADP + H(+). In Dictyostelium discoideum (Social amoeba), this protein is Probable serine/threonine-protein kinase samkC (samkC).